Here is a 296-residue protein sequence, read N- to C-terminus: 4-diphosphocytidyl-2-C-methyl-D-erythritol kinase (296 aa).

Residue K14 is part of the active site. Residue 97–107 (PMGAGMGGGSS) coordinates ATP. The active site involves D139.

It belongs to the GHMP kinase family. IspE subfamily.

It carries out the reaction 4-CDP-2-C-methyl-D-erythritol + ATP = 4-CDP-2-C-methyl-D-erythritol 2-phosphate + ADP + H(+). The protein operates within isoprenoid biosynthesis; isopentenyl diphosphate biosynthesis via DXP pathway; isopentenyl diphosphate from 1-deoxy-D-xylulose 5-phosphate: step 3/6. In terms of biological role, catalyzes the phosphorylation of the position 2 hydroxy group of 4-diphosphocytidyl-2C-methyl-D-erythritol. The sequence is that of 4-diphosphocytidyl-2-C-methyl-D-erythritol kinase from Polynucleobacter necessarius subsp. necessarius (strain STIR1).